Consider the following 237-residue polypeptide: Ribosomal RNA small subunit methyltransferase G (237 aa).

S-adenosyl-L-methionine contacts are provided by residues Gly-78, Phe-83, 129 to 130 (AE), and Arg-148. Residues 216-237 (SKKKETPNKYPRKAGTPNKKPL) form a disordered region.

The protein belongs to the methyltransferase superfamily. RNA methyltransferase RsmG family.

Its subcellular location is the cytoplasm. Functionally, specifically methylates the N7 position of a guanine in 16S rRNA. In Streptococcus agalactiae serotype Ia (strain ATCC 27591 / A909 / CDC SS700), this protein is Ribosomal RNA small subunit methyltransferase G.